A 488-amino-acid chain; its full sequence is Cobyric acid synthase (488 aa).

One can recognise a GATase cobBQ-type domain in the interval 252 to 440; it reads VPLIAVLRFP…VHGLFANDRQ (189 aa). Cys-334 acts as the Nucleophile in catalysis. His-432 is an active-site residue.

The protein belongs to the CobB/CobQ family. CobQ subfamily.

It participates in cofactor biosynthesis; adenosylcobalamin biosynthesis. Functionally, catalyzes amidations at positions B, D, E, and G on adenosylcobyrinic A,C-diamide. NH(2) groups are provided by glutamine, and one molecule of ATP is hydrogenolyzed for each amidation. The chain is Cobyric acid synthase from Methylorubrum populi (strain ATCC BAA-705 / NCIMB 13946 / BJ001) (Methylobacterium populi).